The sequence spans 561 residues: Lysine--tRNA ligase (561 aa).

2 residues coordinate Mg(2+): Glu-409 and Glu-416.

The protein belongs to the class-II aminoacyl-tRNA synthetase family. As to quaternary structure, homodimer. It depends on Mg(2+) as a cofactor.

The protein localises to the cytoplasm. It catalyses the reaction tRNA(Lys) + L-lysine + ATP = L-lysyl-tRNA(Lys) + AMP + diphosphate. In Trichormus variabilis (strain ATCC 29413 / PCC 7937) (Anabaena variabilis), this protein is Lysine--tRNA ligase.